A 340-amino-acid chain; its full sequence is ATPase BagA (340 aa).

Gly-31, Gly-33, Lys-34, Ser-35, Thr-36, Asn-240, Pro-316, and Val-318 together coordinate ATP.

It belongs to the arsA ATPase family. BagA/BagB subfamily. As to quaternary structure, forms a heterodimer composed of BagA and BagB. Interacts with Rv1509. Also interacts with a large number of proteins, including proteins required for mycolic acid biosynthesis.

Its activity is regulated as follows. The ATPase activity of the BagAB complex is not stimulated by antimonite, an arsenite substitute, suggesting that BagAB is not a transporter for this family of elements. Component of the heterodimeric BagAB ATPase complex, whose two subunits are actively involved in ATP hydrolysis. The ATPase activity is required to mediate resistance against nitric oxide (NO) and elevated levels of glycerol. The sequence is that of ATPase BagA from Mycobacterium tuberculosis (strain ATCC 25618 / H37Rv).